A 307-amino-acid polypeptide reads, in one-letter code: Protein pid-3 (307 aa).

As to quaternary structure, component of the pid-1 variant of the PETISCO complex (also called the pid-3, erh-2, tofu-6, and ife-3 small RNA complex) containing at least pid-1, tofu-6, ife-3, pid-3, and erh-2, which is required for the biogenesis of a class of 21 nucleotide PIWI-interacting RNAs (piRNAs) that possess a uracil residue at the 5'-end (also called 21U-RNAs). Within the complex interacts with pid-1; the interaction is direct. Component of the tost-1 variant of the PETISCO complex (also called the pid-3, erh-2, tofu-6, and ife-3 small RNA complex) containing at least tost-1, tofu-6, ife-3, pid-3, and erh-2, which plays an essential role in embryogenesis. Within the complex interacts with tost-1. Within the pid-1 and tost-1 variants of the PETISCO complexes interacts with tofu-6 (via the RRM domain) and erh-2. In contrast to the pid-1 variant of the PETISCO complex, the tost-1 variant of the PETISCO complex plays a minor role in the biogenesis of 21U-RNAs. Expressed in the germline (at protein level).

Its subcellular location is the cytoplasm. The protein localises to the perinuclear region. The protein resides in the nucleus. Functionally, component of the pid-1 and tost-1 variants of the PETISCO complexes, which have roles in the biogenesis of a class of 21 nucleotide PIWI-interacting RNAs (piRNAs) that possess a uracil residue at the 5'-end (also called 21U-RNAs) and embryogenesis, respectively. Within the pid-1 variant of the PETISCO complex may stabilize 21U-RNA precursor molecules. Promotes the biogenesis of 21U-RNAs. Required for chromosome segregation and cell division in early embryos. This chain is Protein pid-3, found in Caenorhabditis elegans.